A 166-amino-acid polypeptide reads, in one-letter code: MQIKTKGDLVRAALRKLGVASDATLTDVEPQSMQDAVDDLEAMMAEWYQDGKGIITGYVFSDDENPPAEGDDHGLRSSAVSAVFHNLACRIAPDYALEATAKIIATAKYGKELLYKQTAISRAKRAPYPSRMPTGSGNSFANLNEWHYFPGEQNADSTTPHDEGNG.

As to quaternary structure, monomer; homododecamer upon binding to the portal ring. Interacts (via C-terminus) with the portal protein; this interaction participates in the head completion. Interacts with the Tail hub protein gp10. Interacts with the tail needle protein gp26.

It localises to the virion. Tail protein that binds the portal ring and functions as a head completion protein. 12 copies of gp4 form a structural ring at the bottom of the portal ring. Together with gp10 and gp26, gp4 is required for stabilization of the condensed DNA within the capsid; perhaps by plugging the hole through which the DNA enters. Plays a role in ejection of the bacteriophage DNA into the host cell at the initiation of infection. Functions as an exolysin that catalyzes the cleavage of the glycosidic bonds between N-acetylmuramic acid and N-acetylglucosamine residues in peptidoglycans. The polypeptide is Head-to-tail adapter protein gp4 (4) (Salmonella typhimurium (Bacteriophage P22)).